The primary structure comprises 142 residues: Cell wall-binding protein YqgA (142 aa).

The first 28 residues, Met-1–Ala-28, serve as a signal peptide directing secretion.

In terms of assembly, found in a complex with F(1)F(0) ATP synthase and SpoIIIJ and YqjG.

Its subcellular location is the secreted. It is found in the cell wall. The polypeptide is Cell wall-binding protein YqgA (yqgA) (Bacillus subtilis (strain 168)).